Consider the following 301-residue polypeptide: UDP-3-O-acyl-N-acetylglucosamine deacetylase (301 aa).

The Zn(2+) site is built by His-81, His-237, and Asp-241. The active-site Proton donor is His-264.

It belongs to the LpxC family. The cofactor is Zn(2+).

It catalyses the reaction a UDP-3-O-[(3R)-3-hydroxyacyl]-N-acetyl-alpha-D-glucosamine + H2O = a UDP-3-O-[(3R)-3-hydroxyacyl]-alpha-D-glucosamine + acetate. The protein operates within glycolipid biosynthesis; lipid IV(A) biosynthesis; lipid IV(A) from (3R)-3-hydroxytetradecanoyl-[acyl-carrier-protein] and UDP-N-acetyl-alpha-D-glucosamine: step 2/6. Functionally, catalyzes the hydrolysis of UDP-3-O-myristoyl-N-acetylglucosamine to form UDP-3-O-myristoylglucosamine and acetate, the committed step in lipid A biosynthesis. In Leptospira interrogans serogroup Icterohaemorrhagiae serovar copenhageni (strain Fiocruz L1-130), this protein is UDP-3-O-acyl-N-acetylglucosamine deacetylase.